The sequence spans 187 residues: Phosphatidylethanolamine-binding protein 1 (187 aa).

The residue at position 2 (alanine 2) is an N-acetylalanine; in peptide hippocampal cholinergic neurostimulating. Serine 6 carries the phosphoserine modification. Position 42 is a phosphothreonine (threonine 42). Residues serine 51, serine 52, serine 54, serine 98, and serine 132 each carry the phosphoserine modification. The segment at 93 to 134 is interaction with RAF1; sequence KGNDISSGTVLSDYVGSGPPSGTGLHRYVWLVYEQEQPLSCD.

It belongs to the phosphatidylethanolamine-binding protein family. Has a tendency to form dimers by disulfide cross-linking. Interacts with RAF1 and this interaction is enhanced if RAF1 is phosphorylated on residues 'Ser-338', 'Ser-339', 'Tyr-340' and 'Tyr-341'. Interacts with ALOX15; in response to IL13/interleukin-13, prevents the interaction of PEBP1 with RAF1 to activate the ERK signaling cascade. As to expression, HCNP is expressed in brain. Increased expression in aged senescence-accelerated mice.

It localises to the cytoplasm. Binds ATP, opioids and phosphatidylethanolamine. Has lower affinity for phosphatidylinositol and phosphatidylcholine. Serine protease inhibitor which inhibits thrombin, neuropsin and chymotrypsin but not trypsin, tissue type plasminogen activator and elastase. Inhibits the kinase activity of RAF1 by inhibiting its activation and by dissociating the RAF1/MEK complex and acting as a competitive inhibitor of MEK phosphorylation. Functionally, HCNP may be involved in the function of the presynaptic cholinergic neurons of the central nervous system. HCNP increases the production of choline acetyltransferase but not acetylcholinesterase. Seems to be mediated by a specific receptor. In Mus musculus (Mouse), this protein is Phosphatidylethanolamine-binding protein 1 (Pebp1).